We begin with the raw amino-acid sequence, 238 residues long: Dolichyldiphosphatase 1 (238 aa).

The next 4 helical transmembrane spans lie at 33–53 (LAYLSLSPIFVVVGFLTLIIF), 100–120 (PSSHSQFMWFFSVYSFLFLYL), 130–150 (FLDLLWRHVLSLGLLTAAFLV), and 162–182 (WSQVFYGGVAGSLMAVAWFII).

The protein belongs to the dolichyldiphosphatase family. As to expression, widely expressed with highest levels in brain, kidney, lung and intestine.

Its subcellular location is the endoplasmic reticulum membrane. It catalyses the reaction a di-trans,poly-cis-dolichyl diphosphate + H2O = a di-trans,poly-cis-dolichyl phosphate + phosphate + H(+). The protein operates within protein modification; protein glycosylation. Functionally, required for efficient N-glycosylation. Necessary for maintaining optimal levels of dolichol-linked oligosaccharides. Hydrolyzes dolichyl pyrophosphate at a very high rate and dolichyl monophosphate at a much lower rate. Does not act on phosphatidate. This chain is Dolichyldiphosphatase 1 (Dolpp1), found in Mus musculus (Mouse).